The following is a 65-amino-acid chain: Large ribosomal subunit protein bL35 (65 aa).

The interval 1 to 46 (MPKIKTNRGAAKRFKPTGSGGFKRAQSHRRHILTKKSTKRKRHLRS) is disordered. Residues 25–45 (AQSHRRHILTKKSTKRKRHLR) are compositionally biased toward basic residues.

This sequence belongs to the bacterial ribosomal protein bL35 family.

The sequence is that of Large ribosomal subunit protein bL35 from Thioalkalivibrio sulfidiphilus (strain HL-EbGR7).